Consider the following 331-residue polypeptide: MDEKTKIYDITIIGGGPVGLFAAFYAGMRNASVKIIESLPQLGGQLSTLYPEKYIYDIPGYPAVRAQELVNNLIQQMKPFDPTIALEEAVQSVEKQVDGTFEIITKKDTHYSKAVIITAGNGAFEPRRLDLPEAEQYEGKNIHYFINDLSRFSGRRVAVCGGGDSAVDWALMLEKVASSVAIVHRRNAFRAHEHSVNNLEKSSIAIKTPFIPTEVLGNGDKLTHITLQEVKGDTRETLEIDDFIINYGFVSSLGPIKNWGLELERNSIVVNSKMETSIPGIYCAGDICTYDGKVKLIATGFGEAPTAINNAMNFIDPKTRVQPMHSTSLFE.

7 residues coordinate FAD: E37, Q45, Y50, V90, F124, D286, and T327.

It belongs to the ferredoxin--NADP reductase type 2 family. As to quaternary structure, homodimer. The cofactor is FAD.

The enzyme catalyses 2 reduced [2Fe-2S]-[ferredoxin] + NADP(+) + H(+) = 2 oxidized [2Fe-2S]-[ferredoxin] + NADPH. This Listeria monocytogenes serotype 4b (strain F2365) protein is Ferredoxin--NADP reductase 2.